The chain runs to 156 residues: Putative pre-16S rRNA nuclease (156 aa).

This sequence belongs to the YqgF nuclease family.

It localises to the cytoplasm. In terms of biological role, could be a nuclease involved in processing of the 5'-end of pre-16S rRNA. The chain is Putative pre-16S rRNA nuclease from Ehrlichia canis (strain Jake).